Reading from the N-terminus, the 426-residue chain is Tol-Pal system protein TolB (426 aa).

The N-terminal stretch at 1 to 25 (MSITPSLSRRTVMSLLAAGLSPAFA) is a signal peptide.

It belongs to the TolB family. In terms of assembly, the Tol-Pal system is composed of five core proteins: the inner membrane proteins TolA, TolQ and TolR, the periplasmic protein TolB and the outer membrane protein Pal. They form a network linking the inner and outer membranes and the peptidoglycan layer.

The protein localises to the periplasm. Functionally, part of the Tol-Pal system, which plays a role in outer membrane invagination during cell division and is important for maintaining outer membrane integrity. The chain is Tol-Pal system protein TolB from Polaromonas sp. (strain JS666 / ATCC BAA-500).